The sequence spans 310 residues: Ribosomal RNA small subunit methyltransferase H (310 aa).

Residues Gly33 to His35, Asp52, Phe79, Asp98, and Gln105 contribute to the S-adenosyl-L-methionine site.

This sequence belongs to the methyltransferase superfamily. RsmH family.

The protein localises to the cytoplasm. It carries out the reaction cytidine(1402) in 16S rRNA + S-adenosyl-L-methionine = N(4)-methylcytidine(1402) in 16S rRNA + S-adenosyl-L-homocysteine + H(+). Its function is as follows. Specifically methylates the N4 position of cytidine in position 1402 (C1402) of 16S rRNA. In Campylobacter jejuni subsp. jejuni serotype O:23/36 (strain 81-176), this protein is Ribosomal RNA small subunit methyltransferase H.